The following is a 359-amino-acid chain: MITVNVDLGDRAYPIHIGAGLIGRTELFAPHIKGSSVTIVTNTTVDPLYGDALRAALAPLGKRVSTVVLPDGEAYKNWETLNLIFDGLLTDHADRKTTLVALGGGVVGDMTGFAAACYMRGVPFIQVPTTLLSQVDSSVGGKTGINHPLGKNMIGAFYQPQAVIADIGALTTLPDRELAAGVAEVIKTGAIADAGFFDWIEANVEALNRREPAALAHAVKRSCEIKASVVAADEREGGLRAILNFGHTFGHAIEAGLGYGEWLHGEAVGCGMVMAGDLSVRLGLLDEASRQRLDAVIAAAHLPTRGPALGDARYMDLMRVDKKAEAGAIKFILLKRFGDTLITQAPDEAVFATLAQTTR.

Residues 71–76, 105–109, 129–130, lysine 142, and lysine 151 each bind NAD(+); these read DGEAYK, GVVGD, and TT. Residues glutamate 184, histidine 247, and histidine 264 each contribute to the Zn(2+) site.

Belongs to the sugar phosphate cyclases superfamily. Dehydroquinate synthase family. Co(2+) serves as cofactor. It depends on Zn(2+) as a cofactor. The cofactor is NAD(+).

The protein localises to the cytoplasm. It catalyses the reaction 7-phospho-2-dehydro-3-deoxy-D-arabino-heptonate = 3-dehydroquinate + phosphate. It functions in the pathway metabolic intermediate biosynthesis; chorismate biosynthesis; chorismate from D-erythrose 4-phosphate and phosphoenolpyruvate: step 2/7. Catalyzes the conversion of 3-deoxy-D-arabino-heptulosonate 7-phosphate (DAHP) to dehydroquinate (DHQ). The protein is 3-dehydroquinate synthase of Burkholderia cenocepacia (strain HI2424).